The primary structure comprises 305 residues: MKQLQVLLVAGTHGNEINGIWLFDEWKKSSFLINTHGIKTFQVIGNPEAKKAGKRYIHHDLNRSFKEGSFIKINPLNCERTRASELVNLYGEAGENPCQIALDFHTTTASMGSCIVVYGRRDADLALASLIQNQLGLPVYLHESDQKQTGFLVESWPCGLVVEIGPIGQGLLNSRIISQTKLILETLMEQIHEVKNLNLFFPNKLIIHRHIKSIDFPRDEEGNIDGYVHSLRQSKDWQELKKNDELFCKLNGEIIRFEEDEPYIPVFINEAAYVEKNIAMSFTKRELWNFKKEWKQALIDLIHQK.

Histidine 13 and glutamate 16 together coordinate Zn(2+). Substrate contacts are provided by residues arginine 55 and 62–63 (NR). Histidine 105 serves as a coordination point for Zn(2+). The substrate site is built by glutamate 163 and tyrosine 273.

Belongs to the AspA/AstE family. Aspartoacylase subfamily. Requires Zn(2+) as cofactor.

It catalyses the reaction an N-acyl-L-aspartate + H2O = a carboxylate + L-aspartate. This Prochlorococcus marinus (strain NATL1A) protein is Probable aspartoacylase.